Consider the following 171-residue polypeptide: I (171 aa).

2 disordered regions span residues 57-100 and 143-171; these read IQYP…LFAQ and PRTS…KRRA. Residues 151–162 are compositionally biased toward basic and acidic residues; it reads EFKRGGGRERLP.

The protein belongs to the Orthorubulavirus I protein family.

The polypeptide is I (Mumps virus genotype N (strain L-Zagreb vaccine) (MuV)).